The sequence spans 65 residues: U12-theraphotoxin-Cg1a (65 aa).

The N-terminal stretch at 1 to 21 (MKTSVLLFMLGLTFLFDGLAA) is a signal peptide. Residues 22–29 (INLQEGER) constitute a propeptide that is removed on maturation. 3 disulfides stabilise this stretch: Cys31–Cys45, Cys38–Cys50, and Cys44–Cys57.

Belongs to the neurotoxin 10 (Hwtx-1) family. 31 (Jztx-15) subfamily. In terms of tissue distribution, expressed by the venom gland.

It is found in the secreted. Probable ion channel inhibitor. The protein is U12-theraphotoxin-Cg1a of Chilobrachys guangxiensis (Chinese earth tiger tarantula).